The following is a 509-amino-acid chain: Dihydrolipoyl dehydrogenase, mitochondrial (509 aa).

The transit peptide at Met1–Tyr35 directs the protein to the mitochondrion. Lys66 is modified (N6-acetyllysine; alternate). Lys66 is modified (N6-succinyllysine; alternate). FAD-binding positions include Glu71 to Cys80 and Lys89. Cys80 and Cys85 are oxidised to a cystine. 4 positions are modified to N6-acetyllysine; alternate: Lys104, Lys122, Lys132, and Lys143. N6-succinyllysine; alternate occurs at positions 104, 122, 132, and 143. FAD is bound at residue Gly154. N6-succinyllysine occurs at positions 159 and 166. Thr183–Ser185 is an FAD binding site. NAD(+)-binding positions include Gly220–Glu227 and Glu243. Lys273 and Lys277 each carry N6-succinyllysine. Val278 is an NAD(+) binding site. Phosphoserine is present on residues Ser285 and Ser297. Residue Gly314 coordinates NAD(+). Lys346 carries the N6-acetyllysine modification. FAD is bound by residues Asp355 and Met361–His364. Lys410 carries the N6-acetyllysine; alternate modification. An N6-succinyllysine; alternate modification is found at Lys410. 2 positions are modified to N6-acetyllysine: Lys417 and Lys420. Lys430 carries the N6-succinyllysine modification. His487 serves as the catalytic Proton acceptor. At Ser502 the chain carries Phosphoserine. At Lys505 the chain carries N6-acetyllysine; alternate. N6-succinyllysine; alternate is present on Lys505.

It belongs to the class-I pyridine nucleotide-disulfide oxidoreductase family. Homodimer. Part of the multimeric pyruvate dehydrogenase complex that contains multiple copies of pyruvate dehydrogenase (subunits PDHA (PDHA1 or PDHA2) and PDHB, E1), dihydrolipoamide acetyltransferase (DLAT, E2) and lipoamide dehydrogenase (DLD, E3). These subunits are bound to an inner core composed of about 48 DLAT and 12 PDHX molecules (by non covalent bonds). The 2-oxoglutarate dehydrogenase complex is composed of OGDH (2-oxoglutarate dehydrogenase; E1), DLST (dihydrolipoamide succinyltransferase; E2), DLD (dihydrolipoamide dehydrogenase; E3) and the assembly factor KGD4. It contains multiple copies of the three enzymatic components (E1, E2 and E3). In the nucleus, the 2-oxoglutarate dehydrogenase complex associates with KAT2A. Interacts with PDHX. FAD serves as cofactor. Post-translationally, tyrosine phosphorylated.

Its subcellular location is the mitochondrion matrix. It is found in the nucleus. The protein resides in the cell projection. It localises to the cilium. The protein localises to the flagellum. Its subcellular location is the cytoplasmic vesicle. It is found in the secretory vesicle. The protein resides in the acrosome. The enzyme catalyses N(6)-[(R)-dihydrolipoyl]-L-lysyl-[protein] + NAD(+) = N(6)-[(R)-lipoyl]-L-lysyl-[protein] + NADH + H(+). Its function is as follows. Lipoamide dehydrogenase is a component of the glycine cleavage system as well as an E3 component of three alpha-ketoacid dehydrogenase complexes (pyruvate-, alpha-ketoglutarate-, and branched-chain amino acid-dehydrogenase complex). The 2-oxoglutarate dehydrogenase complex is mainly active in the mitochondrion. A fraction of the 2-oxoglutarate dehydrogenase complex also localizes in the nucleus and is required for lysine succinylation of histones: associates with KAT2A on chromatin and provides succinyl-CoA to histone succinyltransferase KAT2A. In monomeric form may have additional moonlighting function as serine protease. Involved in the hyperactivation of spermatazoa during capacitation and in the spermatazoal acrosome reaction. The chain is Dihydrolipoyl dehydrogenase, mitochondrial (DLD) from Macaca fascicularis (Crab-eating macaque).